Here is a 794-residue protein sequence, read N- to C-terminus: Zinc finger protein 148 (794 aa).

Lys6 participates in a covalent cross-link: Glycyl lysine isopeptide (Lys-Gly) (interchain with G-Cter in SUMO2). At Ser51 the chain carries Phosphoserine. Residues Lys88, Lys115, and Lys132 each participate in a glycyl lysine isopeptide (Lys-Gly) (interchain with G-Cter in SUMO2) cross-link. Residues 171-193 (HVCEHCNAAFRTNYHLQRHVFIH) form a C2H2-type 1 zinc finger. Thr194 is subject to Phosphothreonine. C2H2-type zinc fingers lie at residues 199–221 (FQCS…EKIH) and 227–249 (FRCD…KRTH). Ser250 is modified (phosphoserine). Residues 255–278 (YQCEYCLQYFSRTDRVLKHKRMCH) form a C2H2-type 4 zinc finger. A Glycyl lysine isopeptide (Lys-Gly) (interchain with G-Cter in SUMO2) cross-link involves residue Lys291. Positions 298-338 (EEDSGFSTSPKDNSLPKKKRQKTEKKSSGMDKESSLDKSDL) are disordered. Residues Ser301 and Ser306 each carry the phosphoserine modification. Lys308 participates in a covalent cross-link: Glycyl lysine isopeptide (Lys-Gly) (interchain with G-Cter in SUMO2). The span at 321 to 338 (EKKSSGMDKESSLDKSDL) shows a compositional bias: basic and acidic residues. Lys356 participates in a covalent cross-link: Glycyl lysine isopeptide (Lys-Gly) (interchain with G-Cter in SUMO1); alternate. A Glycyl lysine isopeptide (Lys-Gly) (interchain with G-Cter in SUMO2); alternate cross-link involves residue Lys356. Lys402 is covalently cross-linked (Glycyl lysine isopeptide (Lys-Gly) (interchain with G-Cter in SUMO2)). The residue at position 412 (Ser412) is a Phosphoserine. Glycyl lysine isopeptide (Lys-Gly) (interchain with G-Cter in SUMO2) cross-links involve residues Lys421 and Lys424. Residues 575–588 (SSEVPEVTQSENVG) show a composition bias toward polar residues. The tract at residues 575-596 (SSEVPEVTQSENVGSSSQASSS) is disordered. Lys607 is subject to N6-acetyllysine. Phosphoserine is present on residues Ser665 and Ser784. Positions 775 to 794 (NDNRAGMTSSPDATTGQTFG) are disordered.

The protein belongs to the krueppel C2H2-type zinc-finger protein family. In terms of assembly, interacts with HNRNPDL. Interacts with the 5FMC complex; the interaction requires association with CHTOP. Interacts with CAVIN1. Sumoylated with SUMO2. Desumoylated by SENP3, resulting in the stimulation of transcription of its target genes.

Its subcellular location is the nucleus. Functionally, involved in transcriptional regulation. Represses the transcription of a number of genes including gastrin, stromelysin and enolase. Binds to the G-rich box in the enhancer region of these genes. The protein is Zinc finger protein 148 (ZNF148) of Bos taurus (Bovine).